Reading from the N-terminus, the 149-residue chain is Large ribosomal subunit protein eL24A (149 aa).

2 stretches are compositionally biased toward basic and acidic residues: residues 93–102 (KRNQRPEVRA) and 116–125 (KAASESEKKA). Residues 93–149 (KRNQRPEVRAAARAAALKQRKDKKAASESEKKAIKAKSAASSARGQAIKNAKAAARH) are disordered.

Belongs to the eukaryotic ribosomal protein eL24 family. Component of the large ribosomal subunit (LSU). Mature yeast ribosomes consist of a small (40S) and a large (60S) subunit. The 40S small subunit contains 1 molecule of ribosomal RNA (18S rRNA) and at least 33 different proteins. The large 60S subunit contains 3 rRNA molecules (25S, 5.8S and 5S rRNA) and at least 46 different proteins.

The protein resides in the cytoplasm. In terms of biological role, component of the ribosome, a large ribonucleoprotein complex responsible for the synthesis of proteins in the cell. The small ribosomal subunit (SSU) binds messenger RNAs (mRNAs) and translates the encoded message by selecting cognate aminoacyl-transfer RNA (tRNA) molecules. The large subunit (LSU) contains the ribosomal catalytic site termed the peptidyl transferase center (PTC), which catalyzes the formation of peptide bonds, thereby polymerizing the amino acids delivered by tRNAs into a polypeptide chain. The nascent polypeptides leave the ribosome through a tunnel in the LSU and interact with protein factors that function in enzymatic processing, targeting, and the membrane insertion of nascent chains at the exit of the ribosomal tunnel. This chain is Large ribosomal subunit protein eL24A (rpl2401), found in Schizosaccharomyces pombe (strain 972 / ATCC 24843) (Fission yeast).